Reading from the N-terminus, the 240-residue chain is Expansin-A20 (240 aa).

A signal peptide spans 1-21 (MGNILLQLLAVVALCIAPARS). The Expansin-like EG45 domain occupies 41–145 (GGACGYGNLY…QQVKCWRYGG (105 aa)). N-linked (GlcNAc...) asparagine glycosylation is found at N107 and N207. Residues 155–234 (YFELVLVTNM…GWSFGQTFST (80 aa)) enclose the Expansin-like CBD domain.

It belongs to the expansin family. Expansin A subfamily.

The protein resides in the secreted. It is found in the cell wall. Its subcellular location is the membrane. Its function is as follows. May cause loosening and extension of plant cell walls by disrupting non-covalent bonding between cellulose microfibrils and matrix glucans. No enzymatic activity has been found. May be required for rapid internodal elongation in deepwater rice during submergence. This is Expansin-A20 (EXPA20) from Oryza sativa subsp. japonica (Rice).